A 993-amino-acid chain; its full sequence is DNA-binding protein SMUBP-2 (993 aa).

At alanine 2 the chain carries N-acetylalanine. ATP-binding positions include 214–221, glutamine 403, tyrosine 442, and glutamate 571; that span reads GPPGTGKT. The interval 638 to 785 is SS DNA-binding; the sequence is TAFEYLDDIV…KRRFITVSKR (148 aa). Disordered stretches follow at residues 651 to 723, 782 to 828, and 841 to 879; these read YSHE…VESQ, VSKR…PDQP, and VRSAQGQPASKEQQASGQQKLPEKKKKKAKGHPATDLPT. Composition is skewed to polar residues over residues 653-662 and 669-681; these read HENSQGSSHA and PATSTRTGSQRQE. The 64-residue stretch at 723–786 folds into the R3H domain; it reads QDGVDHFRAM…RRFITVSKRA (64 aa). Positions 818 to 828 are enriched in basic and acidic residues; it reads PPREQRGPDQP. The span at 842-859 shows a compositional bias: polar residues; sequence RSAQGQPASKEQQASGQQ. Residues 864-868 carry the Nuclear localization signal motif; it reads KKKKK. Residues 891–940 form an AN1-type zinc finger; that stretch reads VKADNTCGFAKCTAGVTTLGQFCQLCSRRYCLSHHLPEIHGCGERARAHA. Positions 897, 902, 913, 916, 921, 924, 930, and 932 each coordinate Zn(2+). A disordered region spans residues 971–993; it reads RRLDKKLSELSNQRTSRRKERGT.

The protein belongs to the DNA2/NAM7 helicase family. As to quaternary structure, homooligomer. Interacts with RUVBL1. Interacts with RUVBL2. Interacts with GTF3C1. Interacts with ABT1. Interacts with ribosomes. Expressed in all tissues examined. Expressed in the developing and adult human brain, with highest expression in the cerebellum. Moderately expressed in fibroblasts.

Its subcellular location is the nucleus. The protein resides in the cytoplasm. It localises to the cell projection. It is found in the axon. It carries out the reaction ATP + H2O = ADP + phosphate + H(+). In terms of biological role, 5' to 3' helicase that unwinds RNA and DNA duplexes in an ATP-dependent reaction. Specific to 5'-phosphorylated single-stranded guanine-rich sequences. May play a role in RNA metabolism, ribosome biogenesis or initiation of translation. May play a role in regulation of transcription. Interacts with tRNA-Tyr. The polypeptide is DNA-binding protein SMUBP-2 (IGHMBP2) (Homo sapiens (Human)).